A 1230-amino-acid polypeptide reads, in one-letter code: Formin-like protein 14 (1230 aa).

One can recognise a Phosphatase tensin-type domain in the interval 1–194; that stretch reads MSLLSRFFYK…QYVARRNINS (194 aa). C127 functions as the Phosphocysteine intermediate in the catalytic mechanism. Residues 200–339 form the C2 tensin-type domain; that stretch reads ERALSLDCVI…FRAEVLFGEV (140 aa). 3 disordered regions span residues 412–432, 460–822, and 1187–1230; these read FNSP…SSDE, HESS…LKPL, and ENEK…RHRT. Residues 484–496 show a composition bias toward low complexity; sequence DNPLNLPSDPPSS. 4 stretches are compositionally biased toward pro residues: residues 503 to 514, 524 to 535, 545 to 556, and 566 to 575; these read LPPPPPPPPPPL, SQPPPPPPPPPL, and SQPPPPPPLP. Residues 579 to 591 are compositionally biased toward polar residues; it reads NRDPLTTLHQPIN. 7 stretches are compositionally biased toward pro residues: residues 592–630, 637–649, 660–672, 679–688, 699–711, 718–728, and 735–766; these read KTPP…PPPS, PSAP…PPPS, QPPP…PPTR, APPPPPPPPT, PSTP…PPPK, PKPPAPPPLPP, and APPP…PPPG. Positions 809 to 1207 constitute an FH2 domain; it reads VPTAAPKKTA…KLEKEAIKEK (399 aa). The span at 1187 to 1215 shows a compositional bias: basic and acidic residues; the sequence is ENEKQAEAEKKKLEKEAIKEKSATKKDGV.

This sequence belongs to the formin-like family. Class-II subfamily.

The chain is Formin-like protein 14 (FH14) from Arabidopsis thaliana (Mouse-ear cress).